The primary structure comprises 411 residues: MSLEAIVFDRSELENVSVKVLDQLLLPYTTKYVPIHTIDDGYSVIKSMQVRGAPAIAIVGSLSVLTEVQLIKHNPTSDVATLYSLVNWESTKTVLNKRLDFLLSSRPTAVNLSNSLVEIKNILKSSSDLKAFDGSLYNYVCELIDEDLANNMKMGDNGAKYLIDVLQKDGFKDEFAVLTICNTGSLATSGYGTALGVIRSLWKDSLAKTDKADSGLDNEKCPRMGHVFPLETRPYNQGSRLTAYELVYDKIPSTLITDSSIAYRIRTSPIPIKAAFVGADRIVRNGDTANKIGTLQLAVICKQFGIKFFVVAPKTTIDNVTETGDDIIVEERNPEEFKVVTGTVINPENGSLILNESGEPITGKVGIAPLEINVWNPAFDITPHELIDGIITEEGVFTKNSSGEFQLESLF.

Position 2 is an N-acetylserine (S2). D280 functions as the Proton donor in the catalytic mechanism. Position 351 is a phosphoserine (S351).

Belongs to the eIF-2B alpha/beta/delta subunits family. MtnA subfamily. In terms of assembly, homodimer.

It is found in the cytoplasm. The protein resides in the nucleus. The enzyme catalyses 5-(methylsulfanyl)-alpha-D-ribose 1-phosphate = 5-(methylsulfanyl)-D-ribulose 1-phosphate. It participates in amino-acid biosynthesis; L-methionine biosynthesis via salvage pathway; L-methionine from S-methyl-5-thio-alpha-D-ribose 1-phosphate: step 1/6. Catalyzes the interconversion of methylthioribose-1-phosphate (MTR-1-P) into methylthioribulose-1-phosphate (MTRu-1-P). The sequence is that of Methylthioribose-1-phosphate isomerase from Saccharomyces cerevisiae (strain JAY291) (Baker's yeast).